The sequence spans 193 residues: Small ribosomal subunit protein eS1 (193 aa).

The protein belongs to the eukaryotic ribosomal protein eS1 family.

The sequence is that of Small ribosomal subunit protein eS1 from Sulfurisphaera tokodaii (strain DSM 16993 / JCM 10545 / NBRC 100140 / 7) (Sulfolobus tokodaii).